A 209-amino-acid polypeptide reads, in one-letter code: Small ribosomal subunit protein uS3 (209 aa).

Residues 38 to 107 (IRKFIKNKYY…RVVINIEEIK (70 aa)) enclose the KH type-2 domain.

This sequence belongs to the universal ribosomal protein uS3 family. Part of the 30S ribosomal subunit. Forms a tight complex with proteins S10 and S14.

Its function is as follows. Binds the lower part of the 30S subunit head. Binds mRNA in the 70S ribosome, positioning it for translation. The chain is Small ribosomal subunit protein uS3 from Thermotoga sp. (strain RQ2).